The sequence spans 169 residues: Putative ribonuclease VapC50 (169 aa).

Toxic component of a type II toxin-antitoxin (TA) system. An RNase. The cognate antitoxin is VapB50. This Mycobacterium tuberculosis (strain ATCC 25618 / H37Rv) protein is Putative ribonuclease VapC50.